Reading from the N-terminus, the 445-residue chain is C4-dicarboxylate transport protein (445 aa).

The next 8 membrane-spanning stretches (helical) occupy residues 24–44, 62–82, 105–125, 163–183, 201–221, 237–257, 322–342, and 370–390; these read VLYV…WVSP, LIKM…IAHI, FALI…GLAA, GDIL…MALG, FGVI…AMAF, LVAL…GLIA, IYMT…LTFT, and AGTL…VFSI.

This sequence belongs to the dicarboxylate/amino acid:cation symporter (DAACS) (TC 2.A.23) family.

It is found in the cell inner membrane. Functionally, responsible for the transport of dicarboxylates such as succinate, fumarate, and malate from the periplasm across the membrane. This Rhodopseudomonas palustris (strain BisB5) protein is C4-dicarboxylate transport protein.